Reading from the N-terminus, the 391-residue chain is Elongation factor Tu (391 aa).

Positions 10 to 201 (KPHVNIGTIG…EVDNYIPTPE (192 aa)) constitute a tr-type G domain. The G1 stretch occupies residues 19 to 26 (GHVDHGKT). 19-26 (GHVDHGKT) provides a ligand contact to GTP. Residue threonine 26 coordinates Mg(2+). The segment at 55–59 (GITIS) is G2. The interval 76-79 (DCPG) is G3. GTP contacts are provided by residues 76-80 (DCPGH) and 131-134 (NKVD). The interval 131–134 (NKVD) is G4. The segment at 169-171 (SAL) is G5.

It belongs to the TRAFAC class translation factor GTPase superfamily. Classic translation factor GTPase family. EF-Tu/EF-1A subfamily. As to quaternary structure, monomer.

It is found in the cytoplasm. The enzyme catalyses GTP + H2O = GDP + phosphate + H(+). In terms of biological role, GTP hydrolase that promotes the GTP-dependent binding of aminoacyl-tRNA to the A-site of ribosomes during protein biosynthesis. In Bartonella henselae (strain ATCC 49882 / DSM 28221 / CCUG 30454 / Houston 1) (Rochalimaea henselae), this protein is Elongation factor Tu.